Consider the following 114-residue polypeptide: uncharacterized protein (114 aa).

This is an uncharacterized protein from Archaeoglobus fulgidus (strain ATCC 49558 / DSM 4304 / JCM 9628 / NBRC 100126 / VC-16).